Reading from the N-terminus, the 812-residue chain is MRTKRTRGTRNVGASMPAGAANADSEDWKEYVSEDIIAQLNKHQLPYSEILDEKIADLANHWHFQYVMAWLSNVCESYTTTTFNTDQYGGSSTKCLWKNIKFDEGVFVTDVFSKIDGKDSNYYNDEVDVDEGSQNLYDRIRLQLLHQLAGNKSGQLKDWNVIVNHHLQNSSAYSDLVTDLPFLELEIARQFDIIYSIIKLIEMKNMIFKNYLANNLHLFTFSEVILDDDNSGGEEMKSLFALPNVGVLVKKTIHRVKEGSSSQVSQTLNIPIKLQNCTIKESDPDIPDSVELIHLEYSHDIDAYLQSITIDYDVITTNWGSMLEYWSENKSSKAIDEFITNLIPVYAEHRLYSAKLLANREKERAIAELMTRRKRSSRLVAKEEENKKKDLESEWFEKLDEREQFIRHRNKLVSKEIKKIKDLLWNQLWQLYDQDYRDEKLTRRNELKDRSGSGTPFFETSLGREEDNPLNEIDIGVLDHGPNFQSSIIPVEPPIPGTVGPLQTGDVPELPSDFCITKEELDELANYGIFTPQQEPDNQDSVFQCPGEPELAPMIITEDTETDLFNNRPLICCDHCYRWQHWECQPPKIIELISSTTKSPQHTLSQRDFGVIIMGNSHGNRRSSRRPQSTLEPSTKSSRPTDKRKPLSECSTFICAWCIRDLELELRNIFVPELKIIRAKQRKQQEDRERRKKMKEEKKRLEELAKKRELTESVSPPVFNNAFANMSSSTTPSIAAYEKTNPAINPAPNVNAAHPIITYSQQTGSKTVPQAPQAPQTSQASIQPQQQQQQQQQQQPLHPKEQNFHFQFPPTN.

Disordered regions lie at residues 1 to 21 (MRTK…AGAA), 614 to 646 (MGNS…KRKP), 679 to 704 (AKQR…LEEL), and 762 to 812 (QTGS…PPTN). Residues 627-638 (PQSTLEPSTKSS) are compositionally biased toward polar residues. Residues 673–714 (ELKIIRAKQRKQQEDRERRKKMKEEKKRLEELAKKRELTESV) are a coiled coil. The segment covering 683–704 (KQQEDRERRKKMKEEKKRLEEL) has biased composition (basic and acidic residues). Over residues 769–796 (PQAPQAPQTSQASIQPQQQQQQQQQQQP) the composition is skewed to low complexity.

Component of the ISW1B complex, which at least consists of ISW1, IOC2 and IOC4.

It localises to the nucleus. Functionally, functions as a component of the ISW1B complex, which acts in remodeling the chromatin by catalyzing an ATP-dependent alteration in the structure of nucleosomal DNA. The ISW1B complex acts within coding regions to control the amount of RNA polymerase II released into productive elongation and to coordinate elongation with termination and pre-mRNA processing. The chain is ISWI one complex protein 2 (IOC2) from Saccharomyces cerevisiae (strain ATCC 204508 / S288c) (Baker's yeast).